The primary structure comprises 448 residues: Deoxyguanosinetriphosphate triphosphohydrolase-like protein (448 aa).

Residues 1–26 are disordered; it reads MQINSSWQERFLADPPREKDHRPPFR. Over residues 11–26 the composition is skewed to basic and acidic residues; the sequence is FLADPPREKDHRPPFR. The HD domain maps to 59–272; that stretch reads RLTHSLEVAQ…MELADDIAYA (214 aa).

The protein belongs to the dGTPase family. Type 2 subfamily.

In Histophilus somni (strain 129Pt) (Haemophilus somnus), this protein is Deoxyguanosinetriphosphate triphosphohydrolase-like protein.